Consider the following 349-residue polypeptide: UDP-3-O-acylglucosamine N-acyltransferase (349 aa).

The active-site Proton acceptor is the H246.

The protein belongs to the transferase hexapeptide repeat family. LpxD subfamily. In terms of assembly, homotrimer.

The catalysed reaction is a UDP-3-O-[(3R)-3-hydroxyacyl]-alpha-D-glucosamine + a (3R)-hydroxyacyl-[ACP] = a UDP-2-N,3-O-bis[(3R)-3-hydroxyacyl]-alpha-D-glucosamine + holo-[ACP] + H(+). Its pathway is bacterial outer membrane biogenesis; LPS lipid A biosynthesis. Its function is as follows. Catalyzes the N-acylation of UDP-3-O-acylglucosamine using 3-hydroxyacyl-ACP as the acyl donor. Is involved in the biosynthesis of lipid A, a phosphorylated glycolipid that anchors the lipopolysaccharide to the outer membrane of the cell. The sequence is that of UDP-3-O-acylglucosamine N-acyltransferase from Protochlamydia amoebophila (strain UWE25).